Consider the following 226-residue polypeptide: ATP synthase subunit a (226 aa).

6 consecutive transmembrane segments (helical) span residues 22-42 (SMNW…FWLI), 73-93 (IIIF…SLIP), 102-122 (LLLN…YLIY), 135-155 (LNSP…SLII), 173-193 (LILT…PINL), and 202-222 (LEIF…ILYF).

The protein belongs to the ATPase A chain family. As to quaternary structure, F-type ATPases have 2 components, CF(1) - the catalytic core - and CF(0) - the membrane proton channel. CF(1) has five subunits: alpha(3), beta(3), gamma(1), delta(1), epsilon(1). CF(0) has three main subunits: a, b and c.

It is found in the mitochondrion inner membrane. In terms of biological role, mitochondrial membrane ATP synthase (F(1)F(0) ATP synthase or Complex V) produces ATP from ADP in the presence of a proton gradient across the membrane which is generated by electron transport complexes of the respiratory chain. F-type ATPases consist of two structural domains, F(1) - containing the extramembraneous catalytic core and F(0) - containing the membrane proton channel, linked together by a central stalk and a peripheral stalk. During catalysis, ATP synthesis in the catalytic domain of F(1) is coupled via a rotary mechanism of the central stalk subunits to proton translocation. Key component of the proton channel; it may play a direct role in the translocation of protons across the membrane. The protein is ATP synthase subunit a (ATP6) of Apis mellifera ligustica (Common honeybee).